A 478-amino-acid chain; its full sequence is Noelin-2 (478 aa).

The N-terminal stretch at 1–16 (MSVPLLKIGAVLSTMA) is a signal peptide. N-linked (GlcNAc...) asparagine glycans are attached at residues asparagine 33, asparagine 98, asparagine 179, asparagine 299, asparagine 334, asparagine 423, and asparagine 465. Coiled coils occupy residues 86 to 109 (SREL…LELR) and 160 to 218 (LEQY…QKLG). The Olfactomedin-like domain maps to 218 to 470 (GCGKLTGVSN…QVLYNVTLFH (253 aa)). Cysteine 219 and cysteine 401 form a disulfide bridge.

As to quaternary structure, peripherally associated with AMPAR complex. AMPAR complex consists of an inner core made of 4 pore-forming GluA/GRIA proteins (GRIA1, GRIA2, GRIA3 and GRIA4) and 4 major auxiliary subunits arranged in a twofold symmetry. One of the two pairs of distinct binding sites is occupied either by CNIH2, CNIH3 or CACNG2, CACNG3. The other harbors CACNG2, CACNG3, CACNG4, CACNG8 or GSG1L. This inner core of AMPAR complex is complemented by outer core constituents binding directly to the GluA/GRIA proteins at sites distinct from the interaction sites of the inner core constituents. Outer core constituents include at least PRRT1, PRRT2, CKAMP44/SHISA9, FRRS1L and NRN1. The proteins of the inner and outer core serve as a platform for other, more peripherally associated AMPAR constituents, including OLFM2. Alone or in combination, these auxiliary subunits control the gating and pharmacology of the AMPAR complex and profoundly impact their biogenesis and protein processing. Interacts with GRIA2. Interacts with OLFM1 and OLFM3. Interacts with SRF; the interaction promotes dissociation of SRF from the transcriptional repressor HEY2. Interacts with RUNX2. Expressed in the brain (at protein level). Expressed in carotid arteries and the aorta, mainly in aortic SMCs.

The protein resides in the secreted. It localises to the synapse. Its subcellular location is the membrane. It is found in the nucleus. The protein localises to the cytoplasm. In terms of biological role, involved in transforming growth factor beta (TGF-beta)-induced smooth muscle differentiation. TGF-beta induces expression and nuclear translocation of OLFM2 where it binds to SRF, causing its dissociation from the transcriptional repressor HEY2/HERP1 and facilitating binding of SRF to target genes. Plays a role in AMPAR complex organization. Is a regulator of vascular smooth-muscle cell (SMC) phenotypic switching, that acts by promoting RUNX2 and inhibiting MYOCD binding to SRF. SMC phenotypic switching is the process through which vascular SMCs undergo transition between a quiescent contractile phenotype and a proliferative synthetic phenotype in response to pathological stimuli. SMC phenotypic plasticity is essential for vascular development and remodeling. The polypeptide is Noelin-2 (Olfm2) (Rattus norvegicus (Rat)).